The primary structure comprises 97 residues: U-reduvitoxin-Pr10a (97 aa).

The N-terminal stretch at 1–18 is a signal peptide; the sequence is MKTALFLVFALAFIAVEG. Pacifastin domains are found at residues 22-59 and 62-97; these read KACS…CPPR and KQSC…RLCW. Cystine bridges form between cysteine 24–cysteine 42, cysteine 37–cysteine 56, and cysteine 40–cysteine 51. The pro-Pro-Arg motif necessary for proteolytic processing stretch occupies residues 57–59; the sequence is PPR. Intrachain disulfides connect cysteine 65/cysteine 82, cysteine 77/cysteine 96, and cysteine 80/cysteine 91.

This sequence belongs to the protease inhibitor I19 family. Expressed by the venom gland.

It is found in the secreted. In terms of biological role, inhibits trypsin activity and prophenoloxidase (PPO) activation, an enzyme essential for both clotting and insect innate immune responses. It does not inhibit activity of chymotrypsin and protease K, and has no effect on phenoloxidase (PO) activity. This is U-reduvitoxin-Pr10a from Platymeris rhadamanthus (Red spot assassin bug).